The following is a 341-amino-acid chain: Ketol-acid reductoisomerase (NADP(+)) (341 aa).

The 181-residue stretch at 2–182 (AKIYYNDDAD…GGTRAGVIET (181 aa)) folds into the KARI N-terminal Rossmann domain. Residues 25-28 (YGSQ), Ser51, Ser53, and 83-86 (DQVQ) contribute to the NADP(+) site. Residue His108 is part of the active site. Gly134 is an NADP(+) binding site. A KARI C-terminal knotted domain is found at 183 to 328 (TFTEETESDL…RKLRSLFAWE (146 aa)). Asp191, Glu195, Glu227, and Glu231 together coordinate Mg(2+). Ser252 is a substrate binding site.

Belongs to the ketol-acid reductoisomerase family. Mg(2+) serves as cofactor.

The catalysed reaction is (2R)-2,3-dihydroxy-3-methylbutanoate + NADP(+) = (2S)-2-acetolactate + NADPH + H(+). The enzyme catalyses (2R,3R)-2,3-dihydroxy-3-methylpentanoate + NADP(+) = (S)-2-ethyl-2-hydroxy-3-oxobutanoate + NADPH + H(+). It participates in amino-acid biosynthesis; L-isoleucine biosynthesis; L-isoleucine from 2-oxobutanoate: step 2/4. It functions in the pathway amino-acid biosynthesis; L-valine biosynthesis; L-valine from pyruvate: step 2/4. Involved in the biosynthesis of branched-chain amino acids (BCAA). Catalyzes an alkyl-migration followed by a ketol-acid reduction of (S)-2-acetolactate (S2AL) to yield (R)-2,3-dihydroxy-isovalerate. In the isomerase reaction, S2AL is rearranged via a Mg-dependent methyl migration to produce 3-hydroxy-3-methyl-2-ketobutyrate (HMKB). In the reductase reaction, this 2-ketoacid undergoes a metal-dependent reduction by NADPH to yield (R)-2,3-dihydroxy-isovalerate. This is Ketol-acid reductoisomerase (NADP(+)) from Kocuria rhizophila (strain ATCC 9341 / DSM 348 / NBRC 103217 / DC2201).